The sequence spans 374 residues: UDP-N-acetylglucosamine--N-acetylmuramyl-(pentapeptide) pyrophosphoryl-undecaprenol N-acetylglucosamine transferase (374 aa).

UDP-N-acetyl-alpha-D-glucosamine is bound by residues 13-15, Asn124, Arg165, Ser193, and Gln294; that span reads TGG.

Belongs to the glycosyltransferase 28 family. MurG subfamily.

The protein resides in the cell inner membrane. The enzyme catalyses di-trans,octa-cis-undecaprenyl diphospho-N-acetyl-alpha-D-muramoyl-L-alanyl-D-glutamyl-meso-2,6-diaminopimeloyl-D-alanyl-D-alanine + UDP-N-acetyl-alpha-D-glucosamine = di-trans,octa-cis-undecaprenyl diphospho-[N-acetyl-alpha-D-glucosaminyl-(1-&gt;4)]-N-acetyl-alpha-D-muramoyl-L-alanyl-D-glutamyl-meso-2,6-diaminopimeloyl-D-alanyl-D-alanine + UDP + H(+). It functions in the pathway cell wall biogenesis; peptidoglycan biosynthesis. Cell wall formation. Catalyzes the transfer of a GlcNAc subunit on undecaprenyl-pyrophosphoryl-MurNAc-pentapeptide (lipid intermediate I) to form undecaprenyl-pyrophosphoryl-MurNAc-(pentapeptide)GlcNAc (lipid intermediate II). The chain is UDP-N-acetylglucosamine--N-acetylmuramyl-(pentapeptide) pyrophosphoryl-undecaprenol N-acetylglucosamine transferase from Rhizobium johnstonii (strain DSM 114642 / LMG 32736 / 3841) (Rhizobium leguminosarum bv. viciae).